The primary structure comprises 445 residues: Argininosuccinate synthase (445 aa).

Residues 17-25 (AFSGGLDTS) and Ala43 each bind ATP. Tyr99 contacts L-citrulline. ATP is bound by residues Gly129 and Thr131. 3 residues coordinate L-aspartate: Thr131, Asn135, and Asp136. Position 135 (Asn135) interacts with L-citrulline. Asp136 contacts ATP. Residues Arg139 and Ser192 each contribute to the L-citrulline site. Asp194 contributes to the ATP binding site. Residues Thr201, Glu203, and Glu280 each coordinate L-citrulline.

Belongs to the argininosuccinate synthase family. Type 2 subfamily. In terms of assembly, homotetramer.

It is found in the cytoplasm. The catalysed reaction is L-citrulline + L-aspartate + ATP = 2-(N(omega)-L-arginino)succinate + AMP + diphosphate + H(+). The protein operates within amino-acid biosynthesis; L-arginine biosynthesis; L-arginine from L-ornithine and carbamoyl phosphate: step 2/3. This chain is Argininosuccinate synthase, found in Herminiimonas arsenicoxydans.